Consider the following 156-residue polypeptide: 6,7-dimethyl-8-ribityllumazine synthase (156 aa).

Residues F23, 57–59, and 81–83 contribute to the 5-amino-6-(D-ribitylamino)uracil site; these read AFE and AVI. 86–87 contributes to the (2S)-2-hydroxy-3-oxobutyl phosphate binding site; the sequence is AT. H89 serves as the catalytic Proton donor. Position 114 (N114) interacts with 5-amino-6-(D-ribitylamino)uracil. R128 is a (2S)-2-hydroxy-3-oxobutyl phosphate binding site.

The protein belongs to the DMRL synthase family.

The catalysed reaction is (2S)-2-hydroxy-3-oxobutyl phosphate + 5-amino-6-(D-ribitylamino)uracil = 6,7-dimethyl-8-(1-D-ribityl)lumazine + phosphate + 2 H2O + H(+). It participates in cofactor biosynthesis; riboflavin biosynthesis; riboflavin from 2-hydroxy-3-oxobutyl phosphate and 5-amino-6-(D-ribitylamino)uracil: step 1/2. Functionally, catalyzes the formation of 6,7-dimethyl-8-ribityllumazine by condensation of 5-amino-6-(D-ribitylamino)uracil with 3,4-dihydroxy-2-butanone 4-phosphate. This is the penultimate step in the biosynthesis of riboflavin. This Aliarcobacter butzleri (strain RM4018) (Arcobacter butzleri) protein is 6,7-dimethyl-8-ribityllumazine synthase.